Consider the following 177-residue polypeptide: Non-specific lipid transfer protein GPI-anchored 22 (177 aa).

An N-terminal signal peptide occupies residues 1 to 29 (MARFMAYNQNPQMLALCITVAVMFLGVRS). 4 disulfide bridges follow: Cys38-Cys81, Cys48-Cys63, Cys64-Cys108, and Cys79-Cys117. Asn113 carries an N-linked (GlcNAc...) asparagine glycan. The GPI-anchor amidated serine moiety is linked to residue Ser152. The propeptide at 153 to 177 (SSIKGRDNKQFGLMMAGALSIWYIM) is removed in mature form.

This sequence belongs to the plant LTP family. Expressed in seedlings, preferentially in hypocotyls and roots. Also observed in siliques.

It localises to the cell membrane. Functionally, probable lipid transfer protein. This is Non-specific lipid transfer protein GPI-anchored 22 from Arabidopsis thaliana (Mouse-ear cress).